Consider the following 67-residue polypeptide: Large ribosomal subunit protein bL35 (67 aa).

Belongs to the bacterial ribosomal protein bL35 family.

The polypeptide is Large ribosomal subunit protein bL35 (Mesorhizobium japonicum (strain LMG 29417 / CECT 9101 / MAFF 303099) (Mesorhizobium loti (strain MAFF 303099))).